We begin with the raw amino-acid sequence, 243 residues long: Methylthioribulose-1-phosphate dehydratase (243 aa).

Cysteine 90 lines the substrate pocket. Residues histidine 108 and histidine 110 each contribute to the Zn(2+) site. The Proton donor/acceptor role is filled by glutamate 131. A Zn(2+)-binding site is contributed by histidine 193.

The protein belongs to the aldolase class II family. MtnB subfamily. Zn(2+) serves as cofactor.

It localises to the cytoplasm. The enzyme catalyses 5-(methylsulfanyl)-D-ribulose 1-phosphate = 5-methylsulfanyl-2,3-dioxopentyl phosphate + H2O. Its pathway is amino-acid biosynthesis; L-methionine biosynthesis via salvage pathway; L-methionine from S-methyl-5-thio-alpha-D-ribose 1-phosphate: step 2/6. Catalyzes the dehydration of methylthioribulose-1-phosphate (MTRu-1-P) into 2,3-diketo-5-methylthiopentyl-1-phosphate (DK-MTP-1-P). The sequence is that of Methylthioribulose-1-phosphate dehydratase from Zygosaccharomyces rouxii (strain ATCC 2623 / CBS 732 / NBRC 1130 / NCYC 568 / NRRL Y-229).